Reading from the N-terminus, the 137-residue chain is Small heat shock protein IbpA (137 aa).

Positions 28 to 137 (SQSNGGYPPY…ANKPRRIEIN (110 aa)) constitute a sHSP domain.

This sequence belongs to the small heat shock protein (HSP20) family. In terms of assembly, monomer. Forms homomultimers of about 100-150 subunits at optimal growth temperatures. Conformation changes to monomers at high temperatures or high ionic concentrations.

Its subcellular location is the cytoplasm. Functionally, associates with aggregated proteins, together with IbpB, to stabilize and protect them from irreversible denaturation and extensive proteolysis during heat shock and oxidative stress. Aggregated proteins bound to the IbpAB complex are more efficiently refolded and reactivated by the ATP-dependent chaperone systems ClpB and DnaK/DnaJ/GrpE. Its activity is ATP-independent. This Klebsiella pneumoniae (strain 342) protein is Small heat shock protein IbpA.